A 247-amino-acid polypeptide reads, in one-letter code: Phosphoribosylaminoimidazole-succinocarboxamide synthase (247 aa).

The protein belongs to the SAICAR synthetase family.

The enzyme catalyses 5-amino-1-(5-phospho-D-ribosyl)imidazole-4-carboxylate + L-aspartate + ATP = (2S)-2-[5-amino-1-(5-phospho-beta-D-ribosyl)imidazole-4-carboxamido]succinate + ADP + phosphate + 2 H(+). The protein operates within purine metabolism; IMP biosynthesis via de novo pathway; 5-amino-1-(5-phospho-D-ribosyl)imidazole-4-carboxamide from 5-amino-1-(5-phospho-D-ribosyl)imidazole-4-carboxylate: step 1/2. This Prochlorococcus marinus (strain NATL1A) protein is Phosphoribosylaminoimidazole-succinocarboxamide synthase.